A 92-amino-acid polypeptide reads, in one-letter code: Large ribosomal subunit protein bL28 (92 aa).

The protein belongs to the bacterial ribosomal protein bL28 family.

The polypeptide is Large ribosomal subunit protein bL28 (Borreliella afzelii (strain PKo) (Borrelia afzelii)).